Reading from the N-terminus, the 163-residue chain is Large ribosomal subunit protein uL22c (163 aa).

Belongs to the universal ribosomal protein uL22 family. As to quaternary structure, part of the 50S ribosomal subunit.

Its subcellular location is the plastid. It localises to the chloroplast. Functionally, this protein binds specifically to 23S rRNA. Its function is as follows. The globular domain of the protein is located near the polypeptide exit tunnel on the outside of the subunit, while an extended beta-hairpin is found that lines the wall of the exit tunnel in the center of the 70S ribosome. The protein is Large ribosomal subunit protein uL22c (rpl22) of Lobularia maritima (Sweet alyssum).